The chain runs to 485 residues: Glutamyl-tRNA(Gln) amidotransferase subunit A (485 aa).

Catalysis depends on charge relay system residues Lys-78 and Ser-153. Ser-177 (acyl-ester intermediate) is an active-site residue.

This sequence belongs to the amidase family. GatA subfamily. As to quaternary structure, heterotrimer of A, B and C subunits.

The catalysed reaction is L-glutamyl-tRNA(Gln) + L-glutamine + ATP + H2O = L-glutaminyl-tRNA(Gln) + L-glutamate + ADP + phosphate + H(+). Functionally, allows the formation of correctly charged Gln-tRNA(Gln) through the transamidation of misacylated Glu-tRNA(Gln) in organisms which lack glutaminyl-tRNA synthetase. The reaction takes place in the presence of glutamine and ATP through an activated gamma-phospho-Glu-tRNA(Gln). In Desulfotalea psychrophila (strain LSv54 / DSM 12343), this protein is Glutamyl-tRNA(Gln) amidotransferase subunit A.